Here is a 560-residue protein sequence, read N- to C-terminus: Formate--tetrahydrofolate ligase (560 aa).

69–76 (TPAGEGKS) serves as a coordination point for ATP.

This sequence belongs to the formate--tetrahydrofolate ligase family.

The catalysed reaction is (6S)-5,6,7,8-tetrahydrofolate + formate + ATP = (6R)-10-formyltetrahydrofolate + ADP + phosphate. Its pathway is one-carbon metabolism; tetrahydrofolate interconversion. The chain is Formate--tetrahydrofolate ligase from Listeria monocytogenes serotype 4a (strain HCC23).